Reading from the N-terminus, the 229-residue chain is 3-dehydroquinate dehydratase (229 aa).

3-dehydroquinate contacts are provided by residues 33–35 and Arg-65; that span reads EWR. Residue His-121 is the Proton donor/acceptor of the active site. The Schiff-base intermediate with substrate role is filled by Lys-146. 3-dehydroquinate is bound by residues Arg-188, Ser-207, and Gln-211.

The protein belongs to the type-I 3-dehydroquinase family. As to quaternary structure, homodimer.

The catalysed reaction is 3-dehydroquinate = 3-dehydroshikimate + H2O. Its pathway is metabolic intermediate biosynthesis; chorismate biosynthesis; chorismate from D-erythrose 4-phosphate and phosphoenolpyruvate: step 3/7. Involved in the third step of the chorismate pathway, which leads to the biosynthesis of aromatic amino acids. Catalyzes the cis-dehydration of 3-dehydroquinate (DHQ) and introduces the first double bond of the aromatic ring to yield 3-dehydroshikimate. The sequence is that of 3-dehydroquinate dehydratase from Lactococcus lactis subsp. cremoris (strain SK11).